The following is a 58-amino-acid chain: UPF0391 membrane protein Bxeno_A2959 (58 aa).

2 consecutive transmembrane segments (helical) span residues 4–24 (WALFFAVVAVIAGVLGFTGVA) and 33–53 (FLFIVFVILCVVFLVLGFVVT).

Belongs to the UPF0391 family.

It is found in the cell membrane. In Paraburkholderia xenovorans (strain LB400), this protein is UPF0391 membrane protein Bxeno_A2959.